A 113-amino-acid polypeptide reads, in one-letter code: UPF0060 membrane protein CV_3485 (113 aa).

Helical transmembrane passes span 12–32, 37–57, 67–87, and 91–111; these read GLFV…WLVL, SLWL…LLTL, AAYG…VDGV, and RWDA…MLAP.

Belongs to the UPF0060 family.

Its subcellular location is the cell inner membrane. The sequence is that of UPF0060 membrane protein CV_3485 from Chromobacterium violaceum (strain ATCC 12472 / DSM 30191 / JCM 1249 / CCUG 213 / NBRC 12614 / NCIMB 9131 / NCTC 9757 / MK).